Here is a 151-residue protein sequence, read N- to C-terminus: MAPRKNKVAKEEVQVTLGPQHLVGETVFGVAHIFASFNDTFVHVTDLSGRETIARVTGGMKVKADRDEASPYAAMLAAQDVAEKCKTLGITALHIKLRATGGNKTKTPGPGAQSALRALARSSMKIGRIEDVTPVPSDSTRRKGGRRGRRL.

A disordered region spans residues 131-151 (DVTPVPSDSTRRKGGRRGRRL). Basic residues predominate over residues 142–151 (RKGGRRGRRL).

It belongs to the universal ribosomal protein uS11 family.

This chain is Small ribosomal subunit protein uS11, found in Bombyx mori (Silk moth).